The chain runs to 494 residues: GTPase Der (494 aa).

EngA-type G domains are found at residues 3–166 (PVIA…MDAE) and 207–380 (IKLA…DCST). GTP is bound by residues 9–16 (GRPNVGKS), 56–60 (DTGGI), 118–121 (NKTD), 213–220 (GRPNVGKS), 260–264 (DTAGV), and 325–328 (NKWD). The region spanning 381 to 465 (KRVGTSLLTR…PIRIQFKEGE (85 aa)) is the KH-like domain.

Belongs to the TRAFAC class TrmE-Era-EngA-EngB-Septin-like GTPase superfamily. EngA (Der) GTPase family. In terms of assembly, associates with the 50S ribosomal subunit.

Its function is as follows. GTPase that plays an essential role in the late steps of ribosome biogenesis. This chain is GTPase Der, found in Yersinia enterocolitica serotype O:8 / biotype 1B (strain NCTC 13174 / 8081).